Reading from the N-terminus, the 329-residue chain is Ig gamma-2 chain C region (329 aa).

Disulfide bonds link cysteine 28–cysteine 79, cysteine 142–cysteine 202, and cysteine 248–cysteine 308. An N-linked (GlcNAc...) asparagine glycan is attached at asparagine 178.

The protein resides in the secreted. This chain is Ig gamma-2 chain C region, found in Cavia porcellus (Guinea pig).